The following is a 348-amino-acid chain: UDP-3-O-acylglucosamine N-acyltransferase (348 aa).

His241 serves as the catalytic Proton acceptor.

The protein belongs to the transferase hexapeptide repeat family. LpxD subfamily. As to quaternary structure, homotrimer.

The enzyme catalyses a UDP-3-O-[(3R)-3-hydroxyacyl]-alpha-D-glucosamine + a (3R)-hydroxyacyl-[ACP] = a UDP-2-N,3-O-bis[(3R)-3-hydroxyacyl]-alpha-D-glucosamine + holo-[ACP] + H(+). It participates in bacterial outer membrane biogenesis; LPS lipid A biosynthesis. In terms of biological role, catalyzes the N-acylation of UDP-3-O-acylglucosamine using 3-hydroxyacyl-ACP as the acyl donor. Is involved in the biosynthesis of lipid A, a phosphorylated glycolipid that anchors the lipopolysaccharide to the outer membrane of the cell. This is UDP-3-O-acylglucosamine N-acyltransferase from Neisseria meningitidis serogroup C (strain 053442).